We begin with the raw amino-acid sequence, 64 residues long: Large ribosomal subunit protein uL30 (64 aa).

Residues 1-22 form a disordered region; that stretch reads MAKAAKTIKVEQTRSAIRRQHS.

It belongs to the universal ribosomal protein uL30 family. Part of the 50S ribosomal subunit.

The polypeptide is Large ribosomal subunit protein uL30 (Nitrobacter hamburgensis (strain DSM 10229 / NCIMB 13809 / X14)).